The sequence spans 166 residues: Cytochrome c-type biogenesis protein CcmE (166 aa).

The Cytoplasmic segment spans residues 1-13 (MNFLPKSRKARRR). The helical; Signal-anchor for type II membrane protein transmembrane segment at 14–34 (LTILAVAAPVVALAVGLALWG) threads the bilayer. Residues 35-166 (MRDAISLFYT…QGYKPGKPNT (132 aa)) lie on the Periplasmic side of the membrane. H128 and Y132 together coordinate heme. Residues 143 to 166 (EQGEWRGDGQAPSYQGYKPGKPNT) are disordered.

It belongs to the CcmE/CycJ family.

It is found in the cell inner membrane. Its function is as follows. Heme chaperone required for the biogenesis of c-type cytochromes. Transiently binds heme delivered by CcmC and transfers the heme to apo-cytochromes in a process facilitated by CcmF and CcmH. The polypeptide is Cytochrome c-type biogenesis protein CcmE (Caulobacter sp. (strain K31)).